The sequence spans 268 residues: Aliphatic sulfonates import ATP-binding protein SsuB (268 aa).

In terms of domain architecture, ABC transporter spans 15–236 (LAVRNLQKTF…VRGSHRLAAL (222 aa)). 47–54 (GRSGCGKS) serves as a coordination point for ATP.

The protein belongs to the ABC transporter superfamily. Aliphatic sulfonates importer (TC 3.A.1.17.2) family. In terms of assembly, the complex is composed of two ATP-binding proteins (SsuB), two transmembrane proteins (SsuC) and a solute-binding protein (SsuA).

The protein resides in the cell inner membrane. The catalysed reaction is ATP + H2O + aliphatic sulfonate-[sulfonate-binding protein]Side 1 = ADP + phosphate + aliphatic sulfonateSide 2 + [sulfonate-binding protein]Side 1.. Functionally, part of the ABC transporter complex SsuABC involved in aliphatic sulfonates import. Responsible for energy coupling to the transport system. The protein is Aliphatic sulfonates import ATP-binding protein SsuB of Pseudomonas fluorescens (strain Pf0-1).